The following is a 320-amino-acid chain: Glucokinase (320 aa).

This sequence belongs to the ROK (NagC/XylR) family. Monomer. A divalent metal cation serves as cofactor.

The enzyme catalyses D-glucose + ATP = D-glucose 6-phosphate + ADP + H(+). Its function is as follows. Catalyzes the phosphorylation of D-glucose to D-glucose 6-phosphate using ATP as the phosphate donor. ITP can also serve as an effective phosphoryl donor. According to Hansen et al., the enzyme has a broad hexose specificity, and in addition to glucose, which shows the highest catalytic efficiency, it can also phosphorylate fructose, mannose, glucosamine, N-acetylglucosamine, N-acetylmannosamine and 2-deoxyglucose. However, according to Sakuraba et al., the enzyme shows strict specificity for D-glucose. This chain is Glucokinase, found in Aeropyrum pernix (strain ATCC 700893 / DSM 11879 / JCM 9820 / NBRC 100138 / K1).